Here is a 707-residue protein sequence, read N- to C-terminus: Choline transporter-like protein 4 (707 aa).

Residues 1–32 (MGRKQNENEAHGNSAKYDPSFRGPIKNRGCTD) are Cytoplasmic-facing. Residues 33-53 (IICCVLFLIFILGYIIVGLVA) traverse the membrane as a helical segment. Residues 54 to 227 (WVYGDPRQVL…KIFEDFAQSW (174 aa)) lie on the Extracellular side of the membrane. Residues Asn-67, Asn-185, Asn-195, and Asn-196 are each glycosylated (N-linked (GlcNAc...) asparagine). Residues 228–248 (YWILVALGVALALSLLFILLL) traverse the membrane as a helical segment. The Cytoplasmic portion of the chain corresponds to 249–250 (RL). The chain crosses the membrane as a helical span at residues 251-271 (VAAPLVLLLIVGVLAVLAYGI). Over 272–307 (YHCWQQYQVFRDKGASITQLGFTTNFSAYQSVKETW) the chain is Extracellular. A glycan (N-linked (GlcNAc...) asparagine) is linked at Asn-296. A helical membrane pass occupies residues 308–328 (LAALIVLAVLEGILLLMLIFL). At 329–356 (RQRIRIAIALLKEASRAVGQMMSTMFYP) the chain is on the cytoplasmic side. The helical transmembrane segment at 357–377 (LVTFVLLVICIGYWAVTALYL) threads the bilayer. Residues 378–452 (ATSGQPQYIY…GVLGLFWTVN (75 aa)) are Extracellular-facing. Asn-391, Asn-403, and Asn-413 each carry an N-linked (GlcNAc...) asparagine glycan. The helical transmembrane segment at 453–473 (WVLALGQCVLAGAFASFYWAF) threads the bilayer. Residues 474 to 498 (HKPRDIPTFPLSSAFIRTLRYHTGS) are Cytoplasmic-facing. Residues 499–519 (LAFGALILSLVQIARVILEYI) traverse the membrane as a helical segment. Residues 520–557 (DHKLRGSQNPVARCIICCFKCCLWCLEKFIKFLNRNAY) lie on the Extracellular side of the membrane. The helical transmembrane segment at 558–578 (IMIAIYGKNFCVSAKNAFMLL) threads the bilayer. The Cytoplasmic portion of the chain corresponds to 579 to 594 (MRNVLRVVVLDKVTDL). Residues 595–615 (LLFFGKLLVVGGVGVLSFFFF) form a helical membrane-spanning segment. At 616–635 (SGRIKGLGKDFENPNLNYYW) the chain is on the extracellular side. Residues 636–656 (LPIMTSIMGAYVIASGFFSVF) traverse the membrane as a helical segment. At 657 to 707 (GMCVDTLFLCFLEDLERNDGSQERPYYMPKALLKILGKKNEAPTGGKTRKK) the chain is on the cytoplasmic side.

This sequence belongs to the CTL (choline transporter-like) family. N-glycosylated; N-glycosylation of Asn-67 and Asn-391 is required for a proper thiamine pyrophosphate uptake. As to expression, expressed in colon and cecum.

The protein resides in the membrane. The protein localises to the apical cell membrane. It carries out the reaction choline(out) + n H(+)(in) = choline(in) + n H(+)(out). The catalysed reaction is thiamine diphosphate(out) = thiamine diphosphate(in). Choline transporter that plays a role in the choline-acetylcholine system and is required to the efferent innervation of hair cells in the olivocochlear bundle for the maintenance of physiological function of outer hair cells and the protection of hair cells from acoustic injury. Also described as a thiamine pyrophosphate transporter in colon, may mediate the absorption of microbiota-generated thiamine pyrophosphate and contribute to host thiamine (vitamin B1) homeostasis. This is Choline transporter-like protein 4 from Mus musculus (Mouse).